We begin with the raw amino-acid sequence, 393 residues long: S-adenosylmethionine synthase 2 (393 aa).

Glutamate 9 is a Mg(2+) binding site. Histidine 15 contacts ATP. Glutamate 43 is a binding site for K(+). L-methionine is bound by residues glutamate 56 and glutamine 99. Residues aspartate 167–lysine 169, serine 235–phenylalanine 238, aspartate 246, arginine 252–lysine 253, alanine 269, lysine 273, and lysine 277 contribute to the ATP site. Aspartate 246 is a binding site for L-methionine. Residue lysine 277 participates in L-methionine binding.

This sequence belongs to the AdoMet synthase family. As to quaternary structure, homotetramer. Requires Mn(2+) as cofactor. Mg(2+) serves as cofactor. Co(2+) is required as a cofactor. It depends on K(+) as a cofactor. As to expression, mostly expressed in flowers, seedpods and roots, and, to a lower extent, in stems and leaves.

The protein localises to the cytoplasm. The catalysed reaction is L-methionine + ATP + H2O = S-adenosyl-L-methionine + phosphate + diphosphate. Its pathway is amino-acid biosynthesis; S-adenosyl-L-methionine biosynthesis; S-adenosyl-L-methionine from L-methionine: step 1/1. In terms of biological role, catalyzes the formation of S-adenosylmethionine from methionine and ATP. The reaction comprises two steps that are both catalyzed by the same enzyme: formation of S-adenosylmethionine (AdoMet) and triphosphate, and subsequent hydrolysis of the triphosphate. In Brassica juncea (Indian mustard), this protein is S-adenosylmethionine synthase 2 (MSAMS2).